The primary structure comprises 429 residues: Saccharopine dehydrogenase-like oxidoreductase (429 aa).

Ala2 is subject to N-acetylalanine. Ser217 carries the phosphoserine modification.

Belongs to the saccharopine dehydrogenase family.

The protein is Saccharopine dehydrogenase-like oxidoreductase (SCCPDH) of Pongo abelii (Sumatran orangutan).